The chain runs to 420 residues: Protein phosphatase methylesterase 1 (420 aa).

2 stretches are compositionally biased toward low complexity: residues P18 to S28 and S42 to I51. Residues P18–I51 form a disordered region. Active-site residues include S197, D223, and H354.

The protein belongs to the AB hydrolase superfamily.

It carries out the reaction [phosphatase 2A protein]-C-terminal L-leucine methyl ester + H2O = [phosphatase 2A protein]-C-terminal L-leucine + methanol + H(+). In terms of biological role, demethylates proteins that have been reversibly carboxymethylated. Demethylates the phosphatase PP2A catalytic subunit. The sequence is that of Protein phosphatase methylesterase 1 (ppe1) from Aspergillus fumigatus (strain ATCC MYA-4609 / CBS 101355 / FGSC A1100 / Af293) (Neosartorya fumigata).